A 464-amino-acid polypeptide reads, in one-letter code: UPF0210 protein MA_1691 (464 aa).

The protein belongs to the UPF0210 family.

This Methanosarcina acetivorans (strain ATCC 35395 / DSM 2834 / JCM 12185 / C2A) protein is UPF0210 protein MA_1691.